The chain runs to 80 residues: Sec-independent protein translocase protein TatA (80 aa).

A helical transmembrane segment spans residues methionine 1–glycine 21. The segment at serine 38–glycine 80 is disordered. Positions glycine 58–glycine 80 are enriched in basic and acidic residues.

Belongs to the TatA/E family. As to quaternary structure, the Tat system comprises two distinct complexes: a TatABC complex, containing multiple copies of TatA, TatB and TatC subunits, and a separate TatA complex, containing only TatA subunits. Substrates initially bind to the TatABC complex, which probably triggers association of the separate TatA complex to form the active translocon.

It is found in the cell inner membrane. Part of the twin-arginine translocation (Tat) system that transports large folded proteins containing a characteristic twin-arginine motif in their signal peptide across membranes. TatA could form the protein-conducting channel of the Tat system. The protein is Sec-independent protein translocase protein TatA of Erythrobacter litoralis (strain HTCC2594).